Consider the following 138-residue polypeptide: CLAVATA3/ESR (CLE)-related protein 2 (138 aa).

Positions Met-1–Ala-22 are cleaved as a signal peptide. The interval Ser-23–Met-90 is required for secretion from the host cytoplasm to the host apoplasm. N-linked (GlcNAc...) asparagine glycosylation is found at Asn-37, Asn-87, and Asn-123. Disordered regions lie at residues Ala-66–Val-97 and Leu-116–His-138. Residues Arg-127–His-138 carry the CLE motif.

The protein belongs to the CLV3/ESR signal peptide family. In terms of tissue distribution, highly expressed exclusively within the dorsal esophageal gland cell during syncytium formation in host plants (at protein level).

Its subcellular location is the secreted. It localises to the host cytoplasm. The protein localises to the host extracellular space. It is found in the extracellular space. The protein resides in the apoplast. Functionally, mimics host plant CLE extracellular signal peptides that regulate cell fate. May play a role in the differentiation or division of feeding cells (syncytia) induced in plant roots during infection. This is CLAVATA3/ESR (CLE)-related protein 2 (CLE2) from Heterodera glycines (Soybean cyst nematode worm).